The chain runs to 124 residues: Glycine cleavage system H protein (124 aa).

The Lipoyl-binding domain occupies threonine 22–glutamate 104. Position 63 is an N6-lipoyllysine (lysine 63).

It belongs to the GcvH family. The glycine cleavage system is composed of four proteins: P, T, L and H. (R)-lipoate is required as a cofactor.

Functionally, the glycine cleavage system catalyzes the degradation of glycine. The H protein shuttles the methylamine group of glycine from the P protein to the T protein. This is Glycine cleavage system H protein from Salinibacter ruber (strain DSM 13855 / M31).